Consider the following 143-residue polypeptide: Transcriptional regulator MraZ (143 aa).

SpoVT-AbrB domains lie at 5–47 (EYQH…SLEE) and 76–119 (AAEV…DKSK).

Belongs to the MraZ family. As to quaternary structure, forms oligomers.

It is found in the cytoplasm. Its subcellular location is the nucleoid. This Acetivibrio thermocellus (strain ATCC 27405 / DSM 1237 / JCM 9322 / NBRC 103400 / NCIMB 10682 / NRRL B-4536 / VPI 7372) (Clostridium thermocellum) protein is Transcriptional regulator MraZ.